Consider the following 209-residue polypeptide: Large ribosomal subunit protein uL3 (209 aa).

Residue Q150 is modified to N5-methylglutamine.

This sequence belongs to the universal ribosomal protein uL3 family. In terms of assembly, part of the 50S ribosomal subunit. Forms a cluster with proteins L14 and L19. Methylated by PrmB.

Its function is as follows. One of the primary rRNA binding proteins, it binds directly near the 3'-end of the 23S rRNA, where it nucleates assembly of the 50S subunit. The chain is Large ribosomal subunit protein uL3 from Citrobacter koseri (strain ATCC BAA-895 / CDC 4225-83 / SGSC4696).